The sequence spans 901 residues: HTH-type transcriptional regulator MalT (901 aa).

39 to 46 provides a ligand contact to ATP; that stretch reads SPAGYGKT. The region spanning 829–894 is the HTH luxR-type domain; the sequence is ELIRTSPLTQ…AAVQHAQKLL (66 aa). The segment at residues 853 to 872 is a DNA-binding region (H-T-H motif); that stretch reads NEQIAGELEVAATTIKTHIR.

Belongs to the MalT family. In terms of assembly, monomer in solution. Oligomerizes to an active state in the presence of the positive effectors ATP and maltotriose.

Activated by ATP and maltotriose, which are both required for DNA binding. Functionally, positively regulates the transcription of the maltose regulon whose gene products are responsible for uptake and catabolism of malto-oligosaccharides. Specifically binds to the promoter region of its target genes, recognizing a short DNA motif called the MalT box. This chain is HTH-type transcriptional regulator MalT, found in Shigella boydii serotype 4 (strain Sb227).